A 79-amino-acid chain; its full sequence is Sec-independent protein translocase protein TatA (79 aa).

A helical membrane pass occupies residues 1–21 (MGGFTSIWHWVIVLLVIVLLF). The disordered stretch occupies residues 46-79 (DDEEEAKNEPKTLDAQATQTKVHETSEIKSKQES). Over residues 66–79 (KVHETSEIKSKQES) the composition is skewed to basic and acidic residues.

The protein belongs to the TatA/E family. As to quaternary structure, the Tat system comprises two distinct complexes: a TatABC complex, containing multiple copies of TatA, TatB and TatC subunits, and a separate TatA complex, containing only TatA subunits. Substrates initially bind to the TatABC complex, which probably triggers association of the separate TatA complex to form the active translocon.

It is found in the cell inner membrane. Part of the twin-arginine translocation (Tat) system that transports large folded proteins containing a characteristic twin-arginine motif in their signal peptide across membranes. TatA could form the protein-conducting channel of the Tat system. This chain is Sec-independent protein translocase protein TatA, found in Helicobacter pylori (strain HPAG1).